We begin with the raw amino-acid sequence, 352 residues long: Farnesyl pyrophosphate synthase (352 aa).

Isopentenyl diphosphate-binding residues include K52, R55, and Q93. Mg(2+) contacts are provided by D100 and D104. Residue R109 participates in dimethylallyl diphosphate binding. R110 lines the isopentenyl diphosphate pocket. 5 residues coordinate dimethylallyl diphosphate: K197, T198, Q237, K254, and K263.

This sequence belongs to the FPP/GGPP synthase family. Requires Mg(2+) as cofactor.

It catalyses the reaction isopentenyl diphosphate + dimethylallyl diphosphate = (2E)-geranyl diphosphate + diphosphate. The catalysed reaction is isopentenyl diphosphate + (2E)-geranyl diphosphate = (2E,6E)-farnesyl diphosphate + diphosphate. It functions in the pathway isoprenoid biosynthesis; farnesyl diphosphate biosynthesis; farnesyl diphosphate from geranyl diphosphate and isopentenyl diphosphate: step 1/1. The protein operates within isoprenoid biosynthesis; geranyl diphosphate biosynthesis; geranyl diphosphate from dimethylallyl diphosphate and isopentenyl diphosphate: step 1/1. Functionally, farnesyl pyrophosphate synthase; part of the second module of ergosterol biosynthesis pathway that includes the middle steps of the pathway. ERG20 catalyzes the sequential condensation of isopentenyl pyrophosphate with dimethylallyl pyrophosphate, and then with the resultant geranylpyrophosphate to the ultimate product farnesyl pyrophosphate. The second module is carried out in the vacuole and involves the formation of farnesyl diphosphate, which is also an important intermediate in the biosynthesis of ubiquinone, dolichol, heme and prenylated proteins. Activity by the mevalonate kinase ERG12 first converts mevalonate into 5-phosphomevalonate. 5-phosphomevalonate is then further converted to 5-diphosphomevalonate by the phosphomevalonate kinase ERG8. The diphosphomevalonate decarboxylase MVD1/ERG19 then produces isopentenyl diphosphate. The isopentenyl-diphosphate delta-isomerase IDI1 then catalyzes the 1,3-allylic rearrangement of the homoallylic substrate isopentenyl (IPP) to its highly electrophilic allylic isomer, dimethylallyl diphosphate (DMAPP). Finally the farnesyl diphosphate synthase ERG20 catalyzes the sequential condensation of isopentenyl pyrophosphate with dimethylallyl pyrophosphate, and then with the resultant geranylpyrophosphate to the ultimate product farnesyl pyrophosphate. The protein is Farnesyl pyrophosphate synthase (ERG20) of Saccharomyces cerevisiae (strain ATCC 204508 / S288c) (Baker's yeast).